Reading from the N-terminus, the 643-residue chain is Ecto-NOX disulfide-thiol exchanger 1 (643 aa).

In terms of domain architecture, RRM spans 142–221; that stretch reads KTVFVGGLPE…GRLHVDFAQA (80 aa). Coiled coils occupy residues 307–342 and 425–521; these read VQSA…LTGI and QAYA…QLKG.

The protein belongs to the ENOX family. Cu cation serves as cofactor.

Its subcellular location is the cell membrane. The protein resides in the secreted. It localises to the extracellular space. With respect to regulation, not inhibited by the antitumor sulfonylurea LY181984, the vabilloid capsaicin, and retinoids. Probably acts as a terminal oxidase of plasma electron transport from cytosolic NAD(P)H via hydroquinones to acceptors at the cell surface. Hydroquinone oxidase activity alternates with a protein disulfide-thiol interchange/oxidoreductase activity which may control physical membrane displacements associated with vesicle budding or cell enlargement. The activities oscillate with a period length of 24 minutes and play a role in control of the ultradian cellular biological clock. This is Ecto-NOX disulfide-thiol exchanger 1 (Enox1) from Mus musculus (Mouse).